The chain runs to 213 residues: Large ribosomal subunit protein uL3 (213 aa).

N5-methylglutamine is present on glutamine 151.

Belongs to the universal ribosomal protein uL3 family. As to quaternary structure, part of the 50S ribosomal subunit. Forms a cluster with proteins L14 and L19. Post-translationally, methylated by PrmB.

One of the primary rRNA binding proteins, it binds directly near the 3'-end of the 23S rRNA, where it nucleates assembly of the 50S subunit. The polypeptide is Large ribosomal subunit protein uL3 (Rhizobium etli (strain CIAT 652)).